The primary structure comprises 222 residues: Triosephosphate isomerase (222 aa).

9-11 is a binding site for substrate; it reads NYK. H93 serves as the catalytic Electrophile. Catalysis depends on E141, which acts as the Proton acceptor. Substrate is bound by residues I146, G181, and 202 to 203; that span reads AS.

The protein belongs to the triosephosphate isomerase family. As to quaternary structure, homotetramer; dimer of dimers.

The protein localises to the cytoplasm. It carries out the reaction D-glyceraldehyde 3-phosphate = dihydroxyacetone phosphate. It functions in the pathway carbohydrate biosynthesis; gluconeogenesis. Its pathway is carbohydrate degradation; glycolysis; D-glyceraldehyde 3-phosphate from glycerone phosphate: step 1/1. Functionally, involved in the gluconeogenesis. Catalyzes stereospecifically the conversion of dihydroxyacetone phosphate (DHAP) to D-glyceraldehyde-3-phosphate (G3P). The chain is Triosephosphate isomerase from Methanosarcina acetivorans (strain ATCC 35395 / DSM 2834 / JCM 12185 / C2A).